The sequence spans 404 residues: L-cysteine:1D-myo-inositol 2-amino-2-deoxy-alpha-D-glucopyranoside ligase (404 aa).

Residues 1 to 20 (MRTWPTPDVPPLPRTGAPAP) are disordered. C45 serves as a coordination point for Zn(2+). Residues 45 to 48 (CGIT), T60, and 83 to 85 (NVT) each bind L-cysteinyl-5'-AMP. Positions 47–57 (ITPYDATHLGH) match the 'HIGH' region motif. The short motif at 185–190 (ERGGDP) is the 'ERGGDP' region element. The disordered stretch occupies residues 185-216 (ERGGDPDRPGKKHPLDPALWRGEQPGEPSWDG). Basic and acidic residues predominate over residues 186–199 (RGGDPDRPGKKHPL). W226 serves as a coordination point for L-cysteinyl-5'-AMP. C230 contributes to the Zn(2+) binding site. Residue 248-250 (GAD) coordinates L-cysteinyl-5'-AMP. Zn(2+) is bound at residue H255. L280 is an L-cysteinyl-5'-AMP binding site. Positions 286–290 (KMSKS) match the 'KMSKS' region motif.

The protein belongs to the class-I aminoacyl-tRNA synthetase family. MshC subfamily. In terms of assembly, monomer. The cofactor is Zn(2+).

The catalysed reaction is 1D-myo-inositol 2-amino-2-deoxy-alpha-D-glucopyranoside + L-cysteine + ATP = 1D-myo-inositol 2-(L-cysteinylamino)-2-deoxy-alpha-D-glucopyranoside + AMP + diphosphate + H(+). Its function is as follows. Catalyzes the ATP-dependent condensation of GlcN-Ins and L-cysteine to form L-Cys-GlcN-Ins. This chain is L-cysteine:1D-myo-inositol 2-amino-2-deoxy-alpha-D-glucopyranoside ligase, found in Xylanimonas cellulosilytica (strain DSM 15894 / JCM 12276 / CECT 5975 / KCTC 9989 / LMG 20990 / NBRC 107835 / XIL07).